The chain runs to 665 residues: PR5-like receptor kinase (665 aa).

The first 24 residues, 1–24 (MVEGFSLSLMFLLVSHFFVSGVMS), serve as a signal peptide directing secretion. Over 25 to 276 (RNFTIENKCD…TKQKSSWKLK (252 aa)) the chain is Extracellular. N-linked (GlcNAc...) asparagine glycans are attached at residues asparagine 26 and asparagine 88. Cystine bridges form between cysteine 33–cysteine 249, cysteine 81–cysteine 91, cysteine 96–cysteine 103, cysteine 153–cysteine 238, cysteine 158–cysteine 221, cysteine 166–cysteine 184, cysteine 188–cysteine 197, and cysteine 198–cysteine 208. An N-linked (GlcNAc...) asparagine glycan is attached at asparagine 163. An N-linked (GlcNAc...) asparagine glycan is attached at asparagine 233. A helical membrane pass occupies residues 277-297 (LIVGVSAALTLMILIVVVIIV). Residues 298-665 (RTKNMRNSEW…DVLQHGSRSS (368 aa)) lie on the Cytoplasmic side of the membrane. The Protein kinase domain occupies 331–620 (NSFAHVLGKG…ALQVPPNPLL (290 aa)). Residues 337-345 (LGKGGFGTV) and lysine 360 each bind ATP. The Proton acceptor role is filled by aspartate 455.

It in the N-terminal section; belongs to the thaumatin family. The protein in the C-terminal section; belongs to the protein kinase superfamily. Ser/Thr protein kinase family. Autophosphorylated in vitro. As to expression, expressed in roots. Expressed at low levels in stems.

Its subcellular location is the membrane. The catalysed reaction is L-seryl-[protein] + ATP = O-phospho-L-seryl-[protein] + ADP + H(+). It catalyses the reaction L-threonyl-[protein] + ATP = O-phospho-L-threonyl-[protein] + ADP + H(+). Its function is as follows. Possesses kinase activity in vitro. The polypeptide is PR5-like receptor kinase (Arabidopsis thaliana (Mouse-ear cress)).